The sequence spans 337 residues: DNA-directed RNA polymerase subunit alpha (337 aa).

The tract at residues 1–233 (MVREEVAVST…DLFIPFLHAE (233 aa)) is alpha N-terminal domain (alpha-NTD). The tract at residues 266–337 (GIALKCIFID…FTIDLPKNKF (72 aa)) is alpha C-terminal domain (alpha-CTD).

It belongs to the RNA polymerase alpha chain family. In terms of assembly, in plastids the minimal PEP RNA polymerase catalytic core is composed of four subunits: alpha, beta, beta', and beta''. When a (nuclear-encoded) sigma factor is associated with the core the holoenzyme is formed, which can initiate transcription.

The protein localises to the plastid. The protein resides in the chloroplast. The enzyme catalyses RNA(n) + a ribonucleoside 5'-triphosphate = RNA(n+1) + diphosphate. Functionally, DNA-dependent RNA polymerase catalyzes the transcription of DNA into RNA using the four ribonucleoside triphosphates as substrates. The chain is DNA-directed RNA polymerase subunit alpha from Liriodendron tulipifera (Tuliptree).